Reading from the N-terminus, the 1351-residue chain is D-lysergyl-peptide-synthetase subunit 2 (1351 aa).

The segment at 285–684 (RCLSQPTASA…GRKDTQVKLR (400 aa)) is adenylation (A) domain. The Carrier domain maps to 828–904 (APQTTTEKLL…ALACVVRSGK (77 aa)). O-(pantetheine 4'-phosphoryl)serine is present on serine 865. The condensation (C) domain stretch occupies residues 941–1340 (EDVYPCTPLQ…LIRDILAVPQ (400 aa)).

It belongs to the NRP synthetase family.

The protein operates within alkaloid biosynthesis; ergot alkaloid biosynthesis. In terms of biological role, D-lysergyl-peptide-synthetase subunit 2; part of the gene cluster that mediates the biosynthesis of fungal ergot alkaloid ergovaline, the predominant ergopeptine product in E.festucae var. lolii. DmaW catalyzes the first step of ergot alkaloid biosynthesis by condensing dimethylallyl diphosphate (DMAP) and tryptophan to form 4-dimethylallyl-L-tryptophan. The second step is catalyzed by the methyltransferase easF that methylates 4-dimethylallyl-L-tryptophan in the presence of S-adenosyl-L-methionine, resulting in the formation of 4-dimethylallyl-L-abrine. The catalase easC and the FAD-dependent oxidoreductase easE then transform 4-dimethylallyl-L-abrine to chanoclavine-I which is further oxidized by easD in the presence of NAD(+), resulting in the formation of chanoclavine-I aldehyde. Agroclavine dehydrogenase easG then mediates the conversion of chanoclavine-I aldehyde to agroclavine via a non-enzymatic adduct reaction: the substrate is an iminium intermediate that is formed spontaneously from chanoclavine-I aldehyde in the presence of glutathione. The presence of easA is not required to complete this reaction. Further conversion of agroclavine to paspalic acid is a two-step process involving oxidation of agroclavine to elymoclavine and of elymoclavine to paspalic acid, the second step being performed by the elymoclavine oxidase cloA. Paspalic acid is then further converted to D-lysergic acid. Ergovaline is assembled from D-lysergic acid and three different amino acids by the D-lysergyl-peptide-synthetase composed of a monomudular (lpsB) and a trimodular (lpsA) nonribosomal peptide synthetase subunit. This is D-lysergyl-peptide-synthetase subunit 2 from Epichloe festucae var. lolii (Neotyphodium lolii).